The sequence spans 267 residues: 4-hydroxy-tetrahydrodipicolinate reductase (267 aa).

NAD(+)-binding positions include 12-17 (GPRGRM), 100-102 (GTT), and 126-129 (APNF). The Proton donor/acceptor role is filled by His156. His157 is a (S)-2,3,4,5-tetrahydrodipicolinate binding site. Lys160 serves as the catalytic Proton donor. (S)-2,3,4,5-tetrahydrodipicolinate is bound at residue 166–167 (GT).

This sequence belongs to the DapB family.

It is found in the cytoplasm. The catalysed reaction is (S)-2,3,4,5-tetrahydrodipicolinate + NAD(+) + H2O = (2S,4S)-4-hydroxy-2,3,4,5-tetrahydrodipicolinate + NADH + H(+). It carries out the reaction (S)-2,3,4,5-tetrahydrodipicolinate + NADP(+) + H2O = (2S,4S)-4-hydroxy-2,3,4,5-tetrahydrodipicolinate + NADPH + H(+). Its pathway is amino-acid biosynthesis; L-lysine biosynthesis via DAP pathway; (S)-tetrahydrodipicolinate from L-aspartate: step 4/4. In terms of biological role, catalyzes the conversion of 4-hydroxy-tetrahydrodipicolinate (HTPA) to tetrahydrodipicolinate. In Bacillus velezensis (strain DSM 23117 / BGSC 10A6 / LMG 26770 / FZB42) (Bacillus amyloliquefaciens subsp. plantarum), this protein is 4-hydroxy-tetrahydrodipicolinate reductase.